The sequence spans 307 residues: tRNA dimethylallyltransferase (307 aa).

Position 9–16 (9–16 (GPTAIGKT)) interacts with ATP. Position 11-16 (11-16 (TAIGKT)) interacts with substrate. Interaction with substrate tRNA regions lie at residues 34–37 (DSRQ) and 164–168 (QRMMR).

It belongs to the IPP transferase family. Monomer. Requires Mg(2+) as cofactor.

The enzyme catalyses adenosine(37) in tRNA + dimethylallyl diphosphate = N(6)-dimethylallyladenosine(37) in tRNA + diphosphate. Its function is as follows. Catalyzes the transfer of a dimethylallyl group onto the adenine at position 37 in tRNAs that read codons beginning with uridine, leading to the formation of N6-(dimethylallyl)adenosine (i(6)A). The chain is tRNA dimethylallyltransferase from Flavobacterium psychrophilum (strain ATCC 49511 / DSM 21280 / CIP 103535 / JIP02/86).